Reading from the N-terminus, the 41-residue chain is Cytochrome b559 subunit beta (41 aa).

Residues 16–32 (WLAVHALAIPTVFFLGS) form a helical membrane-spanning segment. His20 contributes to the heme binding site.

It belongs to the PsbE/PsbF family. In terms of assembly, heterodimer of an alpha subunit and a beta subunit. PSII is composed of 1 copy each of membrane proteins PsbA, PsbB, PsbC, PsbD, PsbE, PsbF, PsbH, PsbI, PsbJ, PsbK, PsbL, PsbM, PsbT, PsbY, PsbZ, Psb30/Ycf12, at least 3 peripheral proteins of the oxygen-evolving complex and a large number of cofactors. It forms dimeric complexes. Heme b is required as a cofactor.

It localises to the plastid. It is found in the chloroplast thylakoid membrane. Functionally, this b-type cytochrome is tightly associated with the reaction center of photosystem II (PSII). PSII is a light-driven water:plastoquinone oxidoreductase that uses light energy to abstract electrons from H(2)O, generating O(2) and a proton gradient subsequently used for ATP formation. It consists of a core antenna complex that captures photons, and an electron transfer chain that converts photonic excitation into a charge separation. This Euglena gracilis protein is Cytochrome b559 subunit beta.